The following is a 167-amino-acid chain: Interferon gamma (167 aa).

The N-terminal stretch at 1–23 is a signal peptide; that stretch reads MNYTSFIFAFQLCIILCSSGYYC. Q24 is modified (pyrrolidone carboxylic acid). 2 N-linked (GlcNAc...) asparagine glycosylation sites follow: N39 and N107.

This sequence belongs to the type II (or gamma) interferon family. Homodimer. Interacts with IFNGR1 (via extracellular domain); this interaction promotes IFNGR1 dimerization. In terms of tissue distribution, released primarily from activated T lymphocytes.

It is found in the secreted. Functionally, type II interferon produced by immune cells such as T-cells and NK cells that plays crucial roles in antimicrobial, antiviral, and antitumor responses by activating effector immune cells and enhancing antigen presentation. Primarily signals through the JAK-STAT pathway after interaction with its receptor IFNGR1 to affect gene regulation. Upon IFNG binding, IFNGR1 intracellular domain opens out to allow association of downstream signaling components JAK2, JAK1 and STAT1, leading to STAT1 activation, nuclear translocation and transcription of IFNG-regulated genes. Many of the induced genes are transcription factors such as IRF1 that are able to further drive regulation of a next wave of transcription. Plays a role in class I antigen presentation pathway by inducing a replacement of catalytic proteasome subunits with immunoproteasome subunits. In turn, increases the quantity, quality, and repertoire of peptides for class I MHC loading. Increases the efficiency of peptide generation also by inducing the expression of activator PA28 that associates with the proteasome and alters its proteolytic cleavage preference. Up-regulates as well MHC II complexes on the cell surface by promoting expression of several key molecules such as cathepsins B/CTSB, H/CTSH, and L/CTSL. Participates in the regulation of hematopoietic stem cells during development and under homeostatic conditions by affecting their development, quiescence, and differentiation. This is Interferon gamma (IFNG) from Felis catus (Cat).